A 108-amino-acid chain; its full sequence is Urease subunit beta (108 aa).

This sequence belongs to the urease beta subunit family. In terms of assembly, heterotrimer of UreA (gamma), UreB (beta) and UreC (alpha) subunits. Three heterotrimers associate to form the active enzyme.

The protein localises to the cytoplasm. It carries out the reaction urea + 2 H2O + H(+) = hydrogencarbonate + 2 NH4(+). It functions in the pathway nitrogen metabolism; urea degradation; CO(2) and NH(3) from urea (urease route): step 1/1. The chain is Urease subunit beta from Proteus hauseri.